A 128-amino-acid polypeptide reads, in one-letter code: Azurin (128 aa).

A Plastocyanin-like domain is found at 1–128; that stretch reads AECKVTVDST…SMMKGTVTLK (128 aa). An intrachain disulfide couples cysteine 3 to cysteine 26. Residues histidine 46, cysteine 112, histidine 117, and methionine 121 each contribute to the Cu cation site.

It localises to the periplasm. Transfers electrons from cytochrome c551 to cytochrome oxidase. The polypeptide is Azurin (Pseudomonas putida (Arthrobacter siderocapsulatus)).